The following is a 300-amino-acid chain: Putative S-adenosyl-L-methionine-dependent methyltransferase Mkms_0379 (300 aa).

S-adenosyl-L-methionine is bound by residues Asp-128 and 157–158 (DL).

The protein belongs to the UPF0677 family.

Exhibits S-adenosyl-L-methionine-dependent methyltransferase activity. The protein is Putative S-adenosyl-L-methionine-dependent methyltransferase Mkms_0379 of Mycobacterium sp. (strain KMS).